The chain runs to 1217 residues: ATP-dependent helicase/nuclease subunit A (1217 aa).

A UvrD-like helicase ATP-binding domain is found at 10-475 (VIWTDAQWQS…MDLSQNFRSR (466 aa)). 31-38 (AAAGSGKT) lines the ATP pocket. A UvrD-like helicase C-terminal domain is found at 491-786 (DEQVGEVNYD…RMMTIHSSKG (296 aa)).

It belongs to the helicase family. AddA subfamily. As to quaternary structure, heterodimer of AddA and AddB/RexB. Requires Mg(2+) as cofactor.

It catalyses the reaction Couples ATP hydrolysis with the unwinding of duplex DNA by translocating in the 3'-5' direction.. It carries out the reaction ATP + H2O = ADP + phosphate + H(+). Its function is as follows. The heterodimer acts as both an ATP-dependent DNA helicase and an ATP-dependent, dual-direction single-stranded exonuclease. Recognizes the chi site generating a DNA molecule suitable for the initiation of homologous recombination. The AddA nuclease domain is required for chi fragment generation; this subunit has the helicase and 3' -&gt; 5' nuclease activities. This Staphylococcus aureus (strain bovine RF122 / ET3-1) protein is ATP-dependent helicase/nuclease subunit A.